We begin with the raw amino-acid sequence, 740 residues long: Catalase-peroxidase (740 aa).

The segment at residues 107 to 229 (WHAAGTYRIH…LAAVQMGLIY (123 aa)) is a cross-link (tryptophyl-tyrosyl-methioninium (Trp-Tyr) (with M-255)). H108 functions as the Proton acceptor in the catalytic mechanism. Positions 229-255 (YVNPEGPNGNPDPMAAAVDIRETFRRM) form a cross-link, tryptophyl-tyrosyl-methioninium (Tyr-Met) (with W-107). Residue H270 coordinates heme b. The active-site Tryptophan radical intermediate is the W321.

It belongs to the peroxidase family. Peroxidase/catalase subfamily. In terms of assembly, homodimer. Requires heme b as cofactor. In terms of processing, formation of the three residue Trp-Tyr-Met cross-link is important for the catalase, but not the peroxidase activity of the enzyme.

The enzyme catalyses H2O2 + AH2 = A + 2 H2O. The catalysed reaction is 2 H2O2 = O2 + 2 H2O. Functionally, bifunctional enzyme with both catalase and broad-spectrum peroxidase activity, oxidizing various electron donors including NADP(H). Protects M.tuberculosis against toxic reactive oxygen species (ROS) including hydrogen peroxide as well as organic peroxides and thus contributes to its survival within host macrophages by countering the phagocyte oxidative burst. Also displays efficient peroxynitritase activity, which may help the bacterium to persist in macrophages. In terms of biological role, catalyzes the oxidative activation of the antitubercular pro-drug isoniazid (INH) to generate an isonicotinoyl radical that then reacts nonenzymatically with NAD to form an isonicotinoyl-NAD adduct which inhibits InhA. The protein is Catalase-peroxidase of Mycobacterium tuberculosis (strain CDC 1551 / Oshkosh).